We begin with the raw amino-acid sequence, 114 residues long: RutC family protein YoaB (114 aa).

Belongs to the RutC family.

The protein is RutC family protein YoaB (yoaB) of Escherichia coli O6:H1 (strain CFT073 / ATCC 700928 / UPEC).